Consider the following 341-residue polypeptide: MSQPDPMLRPEPLESDGEDRALRPQRLEDFVGQAEARANLRVFIESARMRGKAMDHTLFHGPPGLGKTTLAQIMARELGVNFKMTSGPVLARAGDLAAILTNLEARDVLFIDEIHRMNPAVEEILYPAMEDFELDLVIGEGPAARTVRIELQPFTLVGATTRLGLLTTPLRDRFGIPTRLQFYTIEELDLIVTRGARLMGIPSEPEGTREIARRARGTPRIAGRLLRRVVDFALVEGDGRLTRKIADSALTRLGVDHLGLDTADRRYLTLMAEHYGGGPVGVETLSAALSESRDSIEEVIEPYLMQQGLVSRTPRGRMLARLGWRHLGLDAPRTQESLFDE.

The disordered stretch occupies residues methionine 1–alanine 21. A large ATPase domain (RuvB-L) region spans residues proline 4 to tyrosine 183. ATP contacts are provided by residues leucine 22, arginine 23, glycine 64, lysine 67, threonine 68, threonine 69, glutamate 130–phenylalanine 132, arginine 173, tyrosine 183, and arginine 220. Threonine 68 is a Mg(2+) binding site. Residues threonine 184–glycine 254 form a small ATPAse domain (RuvB-S) region. The tract at residues histidine 257–glutamate 341 is head domain (RuvB-H). Residues arginine 293, arginine 312, and arginine 317 each contribute to the DNA site.

It belongs to the RuvB family. Homohexamer. Forms an RuvA(8)-RuvB(12)-Holliday junction (HJ) complex. HJ DNA is sandwiched between 2 RuvA tetramers; dsDNA enters through RuvA and exits via RuvB. An RuvB hexamer assembles on each DNA strand where it exits the tetramer. Each RuvB hexamer is contacted by two RuvA subunits (via domain III) on 2 adjacent RuvB subunits; this complex drives branch migration. In the full resolvosome a probable DNA-RuvA(4)-RuvB(12)-RuvC(2) complex forms which resolves the HJ.

It localises to the cytoplasm. It carries out the reaction ATP + H2O = ADP + phosphate + H(+). The RuvA-RuvB-RuvC complex processes Holliday junction (HJ) DNA during genetic recombination and DNA repair, while the RuvA-RuvB complex plays an important role in the rescue of blocked DNA replication forks via replication fork reversal (RFR). RuvA specifically binds to HJ cruciform DNA, conferring on it an open structure. The RuvB hexamer acts as an ATP-dependent pump, pulling dsDNA into and through the RuvAB complex. RuvB forms 2 homohexamers on either side of HJ DNA bound by 1 or 2 RuvA tetramers; 4 subunits per hexamer contact DNA at a time. Coordinated motions by a converter formed by DNA-disengaged RuvB subunits stimulates ATP hydrolysis and nucleotide exchange. Immobilization of the converter enables RuvB to convert the ATP-contained energy into a lever motion, pulling 2 nucleotides of DNA out of the RuvA tetramer per ATP hydrolyzed, thus driving DNA branch migration. The RuvB motors rotate together with the DNA substrate, which together with the progressing nucleotide cycle form the mechanistic basis for DNA recombination by continuous HJ branch migration. Branch migration allows RuvC to scan DNA until it finds its consensus sequence, where it cleaves and resolves cruciform DNA. In Paracoccus denitrificans (strain Pd 1222), this protein is Holliday junction branch migration complex subunit RuvB.